The primary structure comprises 294 residues: Cytidine deaminase (294 aa).

CMP/dCMP-type deaminase domains are found at residues 48–168 (DEDA…FGPK) and 186–294 (LTGD…VLLA). Residue 89–91 (NME) coordinates substrate. Residue His102 coordinates Zn(2+). The active-site Proton donor is Glu104. Zn(2+) is bound by residues Cys129 and Cys132.

This sequence belongs to the cytidine and deoxycytidylate deaminase family. In terms of assembly, homodimer. Requires Zn(2+) as cofactor.

The catalysed reaction is cytidine + H2O + H(+) = uridine + NH4(+). It carries out the reaction 2'-deoxycytidine + H2O + H(+) = 2'-deoxyuridine + NH4(+). Functionally, this enzyme scavenges exogenous and endogenous cytidine and 2'-deoxycytidine for UMP synthesis. The protein is Cytidine deaminase of Escherichia coli O17:K52:H18 (strain UMN026 / ExPEC).